A 333-amino-acid chain; its full sequence is MKDYIRRVSDGEDLTQAEAREAASLVFEEATEAQIGALLSALRAKGETEPEIAGFAEGMRAAARRIDPDRSPLVDTCGTGGDGHDTINVSTTSSFVVAGAGVPVAKHGNYSVSSSSGSADVLEEIGVTIDAEPPAVETCIEETGMGFMLAPVFHPAMKAVIGPRKELGMRTIFNVLGPLTNPADADAQVVGVYDEALVPTLADALSRMSVDRALVVHGAGLDEIGVHGESTVAEVDGESVEQYTVTPSDLGVDSHDLSAVAGGSPTENAADMRGILEGDVEGAKRDIILANAGAAIYIAGEADSLAAGVDAARESIDTGAAAAQLASLREFEP.

5-phospho-alpha-D-ribose 1-diphosphate is bound by residues G78, 81–82, T86, 88–91, 106–114, and S118; these read GD, NVST, and KHGNYSVSS. An anthranilate-binding site is contributed by G78. S90 contacts Mg(2+). N109 contributes to the anthranilate binding site. R164 contributes to the anthranilate binding site. Mg(2+) contacts are provided by D222 and E223.

This sequence belongs to the anthranilate phosphoribosyltransferase family. Homodimer. Mg(2+) is required as a cofactor.

It carries out the reaction N-(5-phospho-beta-D-ribosyl)anthranilate + diphosphate = 5-phospho-alpha-D-ribose 1-diphosphate + anthranilate. Its pathway is amino-acid biosynthesis; L-tryptophan biosynthesis; L-tryptophan from chorismate: step 2/5. Functionally, catalyzes the transfer of the phosphoribosyl group of 5-phosphorylribose-1-pyrophosphate (PRPP) to anthranilate to yield N-(5'-phosphoribosyl)-anthranilate (PRA). In Natronomonas pharaonis (strain ATCC 35678 / DSM 2160 / CIP 103997 / JCM 8858 / NBRC 14720 / NCIMB 2260 / Gabara) (Halobacterium pharaonis), this protein is Anthranilate phosphoribosyltransferase.